A 181-amino-acid chain; its full sequence is Insulin-like growth factor 2 (181 aa).

A signal peptide spans 1-24 (MGIPVGKSLLMLFTFLAFASCCIA). Positions 25–52 (AYRPSETLCGGELVDTLQFVCGDRGFYF) are b. 3 cysteine pairs are disulfide-bonded: cysteine 33-cysteine 71, cysteine 45-cysteine 84, and cysteine 70-cysteine 75. Residues 53-64 (SRPASRINRRSR) form a c region. An a region spans residues 65–85 (GIVEECCFRSCDLALLETYCA). Residues 86-91 (TPAKSE) form a d region. A propeptide spans 92 to 181 (RDVSTPPTVL…AFVEVSSDLQ (90 aa)) (e peptide). Threonine 163 carries O-linked (GalNAc...) threonine glycosylation.

This sequence belongs to the insulin family. As to quaternary structure, interacts with MYORG; this interaction is required for IGF2 secretion. Interacts with integrins ITGAV:ITGB3 and ITGA6:ITGB4; integrin-binding is required for IGF2 signaling. Interacts with IGFBP2. Post-translationally, proteolytically processed by PCSK4, proIGF2 is cleaved at Arg-128 and Arg-92 to generate big-IGF2 and mature IGF2.

Its subcellular location is the secreted. Its function is as follows. The insulin-like growth factors possess growth-promoting activity. Major fetal growth hormone in mammals. Plays a key role in regulating fetoplacental development. IGF2 is influenced by placental lactogen. Also involved in tissue differentiation. In adults, involved in glucose metabolism in adipose tissue, skeletal muscle and liver. Acts as a ligand for integrin which is required for IGF2 signaling. Positively regulates myogenic transcription factor MYOD1 function by facilitating the recruitment of transcriptional coactivators, thereby controlling muscle terminal differentiation. Inhibits myoblast differentiation and modulates metabolism via increasing the mitochondrial respiration rate. Functionally, preptin undergoes glucose-mediated co-secretion with insulin, and acts as a physiological amplifier of glucose-mediated insulin secretion. Exhibits osteogenic properties by increasing osteoblast mitogenic activity through phosphoactivation of MAPK1 and MAPK3. This is Insulin-like growth factor 2 from Equus caballus (Horse).